We begin with the raw amino-acid sequence, 145 residues long: 3-hydroxyacyl-[acyl-carrier-protein] dehydratase FabZ (145 aa).

Residue histidine 48 is part of the active site.

This sequence belongs to the thioester dehydratase family. FabZ subfamily.

The protein localises to the cytoplasm. The catalysed reaction is a (3R)-hydroxyacyl-[ACP] = a (2E)-enoyl-[ACP] + H2O. Involved in unsaturated fatty acids biosynthesis. Catalyzes the dehydration of short chain beta-hydroxyacyl-ACPs and long chain saturated and unsaturated beta-hydroxyacyl-ACPs. The chain is 3-hydroxyacyl-[acyl-carrier-protein] dehydratase FabZ from Saccharophagus degradans (strain 2-40 / ATCC 43961 / DSM 17024).